Consider the following 241-residue polypeptide: Fatty acid metabolism regulator protein (241 aa).

One can recognise an HTH gntR-type domain in the interval 6–74 (KGPASFAEKY…HGKPTRVNNF (69 aa)). The segment at residues 34–53 (ERELSELIGVTRTTLREVLQ) is a DNA-binding region (H-T-H motif).

Homodimer.

It is found in the cytoplasm. Multifunctional regulator of fatty acid metabolism. The protein is Fatty acid metabolism regulator protein of Shewanella sp. (strain ANA-3).